Here is a 305-residue protein sequence, read N- to C-terminus: Coiled-coil domain-containing protein 69 (305 aa).

Gly-2 carries N-myristoyl glycine lipidation. A disordered region spans residues 13 to 41 (LRKKKRQKAHQEGLTSKELNDLNAKSQEP). Coiled-coil stretches lie at residues 42–167 (NELL…SVLS) and 216–278 (MERN…KEQN).

This sequence belongs to the CCDC69 family.

It localises to the cytoplasm. The protein localises to the cytoskeleton. The protein resides in the spindle. It is found in the midbody. In terms of biological role, may act as a scaffold to regulate the recruitment and assembly of spindle midzone components. This Xenopus tropicalis (Western clawed frog) protein is Coiled-coil domain-containing protein 69 (ccdc69).